The primary structure comprises 153 residues: Glutamyl-tRNA(Gln) amidotransferase subunit C, mitochondrial (153 aa).

The disordered stretch occupies residues 31-55; the sequence is HPTKVPQQPEPNAFPDLDNNTDDDP.

Belongs to the GatC family. In terms of assembly, subunit of the heterotrimeric GatCAB amidotransferase (AdT) complex, composed of A, B and C subunits.

The protein localises to the mitochondrion. It catalyses the reaction L-glutamyl-tRNA(Gln) + L-glutamine + ATP + H2O = L-glutaminyl-tRNA(Gln) + L-glutamate + ADP + phosphate + H(+). Functionally, allows the formation of correctly charged Gln-tRNA(Gln) through the transamidation of misacylated Glu-tRNA(Gln) in the mitochondria. The reaction takes place in the presence of glutamine and ATP through an activated gamma-phospho-Glu-tRNA(Gln). This chain is Glutamyl-tRNA(Gln) amidotransferase subunit C, mitochondrial, found in Drosophila willistoni (Fruit fly).